The primary structure comprises 182 residues: Hexose transport activator protein (182 aa).

A disordered region spans residues 46-65 (GIWGPMEKKPGGVGKKKGSE).

In terms of biological role, multicopy expression suppresses glucose-uptake defects in various yeast mutants. In Saccharomyces cerevisiae (strain ATCC 204508 / S288c) (Baker's yeast), this protein is Hexose transport activator protein (AHT1).